A 212-amino-acid chain; its full sequence is uncharacterized protein (212 aa).

The N-terminal stretch at 1–21 (MRRLTAFGLALLLLASGVARG) is a signal peptide.

This sequence to E.coli YfaT and T.maritima TM0986.

This is an uncharacterized protein from Pseudomonas aeruginosa (strain ATCC 15692 / DSM 22644 / CIP 104116 / JCM 14847 / LMG 12228 / 1C / PRS 101 / PAO1).